Reading from the N-terminus, the 315-residue chain is Glutathione synthetase (315 aa).

The ATP-grasp domain maps to 125–310 (KLYTAWFADL…ITGMLMDAIE (186 aa)). Residue 151 to 207 (WEKHGDIIMKPLDGMGGASIFRVKEGDPNIGVIAETLTELGNRYCMAQNYLPAIKDG) participates in ATP binding. Positions 281 and 283 each coordinate Mg(2+).

This sequence belongs to the prokaryotic GSH synthase family. Requires Mg(2+) as cofactor. It depends on Mn(2+) as a cofactor.

It carries out the reaction gamma-L-glutamyl-L-cysteine + glycine + ATP = glutathione + ADP + phosphate + H(+). It functions in the pathway sulfur metabolism; glutathione biosynthesis; glutathione from L-cysteine and L-glutamate: step 2/2. The sequence is that of Glutathione synthetase from Salmonella typhimurium (strain LT2 / SGSC1412 / ATCC 700720).